The primary structure comprises 38 residues: Trypsin inhibitor 2 (38 aa).

Q1 carries the pyrrolidone carboxylic acid modification.

In terms of processing, contains disulfide bonds.

Inhibits trypsin-like proteases from the guts of the insect pests P.truncatus, P.americana, Acheta sp and Gryllus sp. The protein is Trypsin inhibitor 2 of Opuntia streptacantha (Prickly pear cactus).